The chain runs to 157 residues: Protein NrdI (157 aa).

Belongs to the NrdI family.

Functionally, probably involved in ribonucleotide reductase function. In Mycoplasma capricolum subsp. capricolum (strain California kid / ATCC 27343 / NCTC 10154), this protein is Protein NrdI.